The chain runs to 932 residues: Progesterone receptor (932 aa).

Positions 1–164 (MTELKAKGPR…PATQGVLSPL (164 aa)) are AF3; mediates transcriptional activation. A disordered region spans residues 1–254 (MTELKAKGPR…GGAAAGGAAA (254 aa)). A modulating, Pro-Rich region spans residues 1–565 (MTELKAKGPR…YSFESLPQKI (565 aa)). Residue Ser-20 is modified to Phosphoserine. The short motif at 55–59 (LDGLL) is the LXXL motif 1 element. Ser-81 is subject to Phosphoserine. Residues 88-103 (SRAEATRGAGGSSSSP) show a composition bias toward low complexity. The short motif at 115 to 119 (LDTLL) is the LXXL motif 2 element. Phosphoserine occurs at positions 130 and 162. The interval 165-304 (MSRSGGKAGD…LATTVMDFIH (140 aa)) is mediates transcriptional transrepression. The short motif at 183 to 187 (KVLPQ) is the Nuclear localization signal element. A phosphoserine mark is found at Ser-190 and Ser-213. A compositionally biased stretch (acidic residues) spans 220–231 (EVEEEDGSESED). Over residues 232–254 (SAGPLLKGKPRALGGAAAGGAAA) the composition is skewed to low complexity. Ser-293 carries the post-translational modification Phosphoserine; by MAPK1. A compositionally biased stretch (low complexity) spans 334–349 (AASAFAPPRSSPSASS). The interval 334 to 356 (AASAFAPPRSSPSASSTPVAVGD) is disordered. Residue Ser-344 is modified to Phosphoserine; by MAPK. Lys-387 participates in a covalent cross-link: Glycyl lysine isopeptide (Lys-Gly) (interchain with G-Cter in SUMO); alternate. Lys-387 is covalently cross-linked (Glycyl lysine isopeptide (Lys-Gly) (interchain with G-Cter in ubiquitin); alternate). Disordered regions lie at residues 414–451 (PDFP…SSAS) and 468–499 (PPQQ…STAA). Residues 417–432 (PLGPPPPLPPRAPPSR) are compositionally biased toward pro residues. Positions 433-451 (PGEAAVTAAPASASVSSAS) are enriched in low complexity. The tract at residues 455–545 (STLECILYKA…VYPPYLNYLR (91 aa)) is AF1; mediates transcriptional activation. Over residues 470–480 (QQGPFAPPPSK) the composition is skewed to pro residues. Residue Lys-530 forms a Glycyl lysine isopeptide (Lys-Gly) (interchain with G-Cter in SUMO) linkage. NR C4-type zinc fingers lie at residues 566–586 (CLIC…CGSC) and 602–626 (CAGR…LRKC). The nuclear receptor DNA-binding region spans 566–638 (CLICGDEASG…AGMVLGGRKF (73 aa)). Ser-675 carries the post-translational modification Phosphoserine. The NR LBD domain occupies 678 to 912 (QDIQLIPPLI…EFPEMMSEVI (235 aa)). The tract at residues 686–932 (LINLLMSIEP…MVKPLLFHKK (247 aa)) is AF2; mediates transcriptional activation. Arg-765 provides a ligand contact to progesterone.

Belongs to the nuclear hormone receptor family. Interacts with SMARD1 and UNC45A. Interacts with CUEDC2; the interaction promotes ubiquitination, decreases sumoylation, and represses transcriptional activity. Interacts with PIAS3; the interaction promotes sumoylation of PR in a hormone-dependent manner, inhibits DNA-binding, and alters nuclear export. Interacts with SP1; the interaction requires ligand-induced phosphorylation on Ser-344 by ERK1/2-MAPK. Interacts with PRMT2. Interacts with NCOA2 and NCOA1. Interacts with KLF9. Interacts with GTF2B. Phosphorylated on multiple serine sites. Several of these sites are hormone-dependent. Phosphorylation on Ser-293 is highly hormone-dependent and modulates ubiquitination and sumoylation on Lys-387. Phosphorylation on Ser-102 and Ser-344 also requires induction by hormone. Basal phosphorylation on Ser-81, Ser-162 and Ser-190 is increased in response to progesterone and can be phosphorylated in vitro by the CDK2-A1 complex. Phosphorylation at Ser-162 and Ser-293, but not at Ser-190, is impaired during the G(2)/M phase of the cell cycle. Phosphorylation on Ser-344 by ERK1/2 MAPK is required for interaction with SP1. Post-translationally, sumoylation is hormone-dependent and represses transcriptional activity. Sumoylation on all three sites is enhanced by PIAS3. Desumoylated by SENP1. Sumoylation on Lys-387, the main site of sumoylation, is repressed by ubiquitination on the same site, and modulated by phosphorylation at Ser-293. In terms of processing, ubiquitination is hormone-dependent and represses sumoylation on the same site. Promoted by MAPK-mediated phosphorylation on Ser-293. Ubiquitinated by UBR5, leading to its degradation: UBR5 specifically recognizes and binds ligand-bound PGR when it is not associated with coactivators (NCOAs). In presence of NCOAs, the UBR5-degron is not accessible, preventing its ubiquitination and degradation. Palmitoylated by ZDHHC7 and ZDHHC21. Palmitoylation is required for plasma membrane targeting and for rapid intracellular signaling via ERK and AKT kinases and cAMP generation.

The protein localises to the nucleus. It localises to the cytoplasm. Its function is as follows. The steroid hormones and their receptors are involved in the regulation of eukaryotic gene expression and affect cellular proliferation and differentiation in target tissues. Transcriptional activator of several progesteron-dependent promoters in a variety of cell types. Involved in activation of SRC-dependent MAPK signaling on hormone stimulation. The sequence is that of Progesterone receptor (PGR) from Hylobates lar (Lar gibbon).